Here is a 115-residue protein sequence, read N- to C-terminus: NADH-ubiquinone oxidoreductase chain 3 (115 aa).

Helical transmembrane passes span 4–24 (LMALLVNITLSTLLIIVAFWL), 55–75 (FFLVAITFLLFDLEIALLLPL), and 84–104 (INIMMLTAFILVSVLALGLAY).

Belongs to the complex I subunit 3 family. Core subunit of respiratory chain NADH dehydrogenase (Complex I) which is composed of 45 different subunits. Interacts with TMEM186. Interacts with TMEM242.

The protein resides in the mitochondrion inner membrane. The catalysed reaction is a ubiquinone + NADH + 5 H(+)(in) = a ubiquinol + NAD(+) + 4 H(+)(out). In terms of biological role, core subunit of the mitochondrial membrane respiratory chain NADH dehydrogenase (Complex I) which catalyzes electron transfer from NADH through the respiratory chain, using ubiquinone as an electron acceptor. Essential for the catalytic activity of complex I. This Peromyscus melanotis (Black-eared mouse) protein is NADH-ubiquinone oxidoreductase chain 3.